An 898-amino-acid polypeptide reads, in one-letter code: Protein translocase subunit SecA (898 aa).

ATP is bound by residues glutamine 87, 105-109 (GEGKT), and aspartate 512. Polar residues predominate over residues 855-865 (MQYQNNEGTSS). A disordered region spans residues 855 to 898 (MQYQNNEGTSSLHEKSEHKIGRNESCPCGSGKKYKHCHGSKAKY). Over residues 866-876 (LHEKSEHKIGR) the composition is skewed to basic and acidic residues. Zn(2+) contacts are provided by cysteine 880, cysteine 882, cysteine 891, and histidine 892. The span at 886–898 (KKYKHCHGSKAKY) shows a compositional bias: basic residues.

This sequence belongs to the SecA family. Monomer and homodimer. Part of the essential Sec protein translocation apparatus which comprises SecA, SecYEG and auxiliary proteins SecDF-YajC and YidC. The cofactor is Zn(2+).

Its subcellular location is the cell inner membrane. The protein resides in the cytoplasm. It catalyses the reaction ATP + H2O + cellular proteinSide 1 = ADP + phosphate + cellular proteinSide 2.. In terms of biological role, part of the Sec protein translocase complex. Interacts with the SecYEG preprotein conducting channel. Has a central role in coupling the hydrolysis of ATP to the transfer of proteins into and across the cell membrane, serving both as a receptor for the preprotein-SecB complex and as an ATP-driven molecular motor driving the stepwise translocation of polypeptide chains across the membrane. This Histophilus somni (strain 2336) (Haemophilus somnus) protein is Protein translocase subunit SecA.